The chain runs to 382 residues: Alanine racemase (382 aa).

Residue Lys-37 is the Proton acceptor; specific for D-alanine of the active site. The residue at position 37 (Lys-37) is an N6-(pyridoxal phosphate)lysine. Arg-135 is a substrate binding site. Tyr-267 serves as the catalytic Proton acceptor; specific for L-alanine. Substrate is bound at residue Met-315.

This sequence belongs to the alanine racemase family. The cofactor is pyridoxal 5'-phosphate.

The catalysed reaction is L-alanine = D-alanine. The protein operates within amino-acid biosynthesis; D-alanine biosynthesis; D-alanine from L-alanine: step 1/1. In terms of biological role, catalyzes the interconversion of L-alanine and D-alanine. May also act on other amino acids. This Geobacter sulfurreducens (strain ATCC 51573 / DSM 12127 / PCA) protein is Alanine racemase (alr).